We begin with the raw amino-acid sequence, 1028 residues long: Antigenic heat-stable 120 kDa protein (1028 aa).

Polar residues-rich tracts occupy residues 359-384 and 391-400; these read GQSKEQPLITPQQTTSSSVEPPQYKQ and PTNQPLQPET. The disordered stretch occupies residues 359–405; that stretch reads GQSKEQPLITPQQTTSSSVEPPQYKQQVPPITPTNQPLQPETSQMQQ.

The protein localises to the cytoplasm. The sequence is that of Antigenic heat-stable 120 kDa protein (sca4) from Rickettsia africae.